A 205-amino-acid polypeptide reads, in one-letter code: Large ribosomal subunit protein uL3 (205 aa).

This sequence belongs to the universal ribosomal protein uL3 family. As to quaternary structure, part of the 50S ribosomal subunit. Forms a cluster with proteins L14 and L19.

One of the primary rRNA binding proteins, it binds directly near the 3'-end of the 23S rRNA, where it nucleates assembly of the 50S subunit. This is Large ribosomal subunit protein uL3 from Bacteroides fragilis (strain ATCC 25285 / DSM 2151 / CCUG 4856 / JCM 11019 / LMG 10263 / NCTC 9343 / Onslow / VPI 2553 / EN-2).